The chain runs to 961 residues: E3 ubiquitin-protein ligase TRIM37 (961 aa).

The residue at position 1 (M1) is an N-acetylmethionine. The segment at 15-55 (CFICMEKLRDARLCPHCSKLCCFSCIRRWLTEQRAQCPHCR) adopts an RING-type; degenerate zinc-finger fold. The segment at 90 to 132 (NEKDKCENHHEKLSVFCWTCKKCICHQCALWGGMHGGHTFKPL) adopts a B box-type zinc-finger fold. Residues C95, H98, C117, and H124 each coordinate Zn(2+). Residues 132–234 (LAEIYEQHVT…VEHQLRSCSK (103 aa)) adopt a coiled-coil conformation. The MATH domain maps to 276 to 403 (YDSATFVLEN…NDTVILRFQV (128 aa)). Positions 419-450 (ITQLEAAQTGYIQQINNLKERLTIELSRTQKS) form a coiled coil. Disordered regions lie at residues 447 to 514 (TQKS…HHEL), 529 to 561 (VNHL…SGEN), 645 to 665 (SLLQ…KQQA), 776 to 811 (AVDS…SPRA), and 874 to 961 (LESH…GGGR). At S454 the chain carries Phosphoserine. Residues 504–514 (KIQNEDYHHEL) are compositionally biased toward basic and acidic residues. The segment covering 535–545 (SSSSASSTATS) has biased composition (low complexity). Positions 548–561 (EENDIDEETMSGEN) are enriched in acidic residues. Over residues 776–787 (AVDSGENSRSKG) the composition is skewed to basic and acidic residues. The segment covering 795-806 (GSSGSSQSGSRH) has biased composition (low complexity). The span at 903 to 915 (SDIECDTENEEQE) shows a compositional bias: acidic residues.

The protein belongs to the TRIM/RBCC family. Associates with the PRC2/EED-EZH2 complex. Post-translationally, auto-ubiquitinated. In terms of tissue distribution, highly expressed in testis and brain. In embryonic tissues, expressed in epithelia, including ducts of the developing pancreas, epithelium of the midgut and nasal epithelium. In adult, detected in the central and peripheral nervous systems, including enteric ganglia, retina and the adrenal medulla (at protein level).

The protein resides in the chromosome. The protein localises to the cytoplasm. It localises to the perinuclear region. Its subcellular location is the peroxisome membrane. It catalyses the reaction S-ubiquitinyl-[E2 ubiquitin-conjugating enzyme]-L-cysteine + [acceptor protein]-L-lysine = [E2 ubiquitin-conjugating enzyme]-L-cysteine + N(6)-ubiquitinyl-[acceptor protein]-L-lysine.. It participates in protein modification; protein ubiquitination. E3 ubiquitin-protein ligase required to prevent centriole reduplication. Probably acts by ubiquitinating positive regulators of centriole reduplication. Mediates monoubiquitination of 'Lys-119' of histone H2A (H2AK119Ub), a specific tag for epigenetic transcriptional repression: associates with some Polycomb group (PcG) multiprotein PRC2-like complex and mediates repression of target genes. Also acts as a positive regulator of peroxisome import by mediating monoubiquitination of PEX5 at 'Lys-472': monoubiquitination promotes PEX5 stabilitation by preventing its polyubiquitination and degradation by the proteasome. The protein is E3 ubiquitin-protein ligase TRIM37 of Mus musculus (Mouse).